A 304-amino-acid polypeptide reads, in one-letter code: MTEKISKCGVVAVLGAPNAGKSTLVNQLVGQKVAITSAKAQTTRARMLGIALHESDDAKTQMILVDTPGIFAPRRRLDRAMVSAAWEGAESADAVLLLVDPVKQRRHELEPLLESLKDRPERKILVLNKVDVAKKEPLLALAQDLSQKVDFAEIYFVSALTGDGVPEMKNALAALMPEGVWHYPEDQVSDASERLLATEITREQLYQQLHEELPYDSAVRPEQYKQRPDGSLEIHQQIVIARESQRPIVLGKGGSRIKAIGEAARKDLSEILGVTVHLFLHVKVDEKWAENKEVFEEIGLDWVR.

One can recognise an Era-type G domain in the interval 7-178; sequence KCGVVAVLGA…KNALAALMPE (172 aa). Positions 15 to 22 are G1; the sequence is GAPNAGKS. Residue 15–22 participates in GTP binding; the sequence is GAPNAGKS. Positions 41 to 45 are G2; the sequence is QTTRA. The interval 66–69 is G3; it reads DTPG. Residues 66–70 and 128–131 contribute to the GTP site; these read DTPGI and NKVD. Residues 128–131 are G4; that stretch reads NKVD. The interval 157–159 is G5; the sequence is VSA. In terms of domain architecture, KH type-2 spans 209-286; sequence LHEELPYDSA…HLFLHVKVDE (78 aa).

Belongs to the TRAFAC class TrmE-Era-EngA-EngB-Septin-like GTPase superfamily. Era GTPase family. In terms of assembly, monomer.

The protein localises to the cytoplasm. It localises to the cell inner membrane. Its function is as follows. An essential GTPase that binds both GDP and GTP, with rapid nucleotide exchange. Plays a role in 16S rRNA processing and 30S ribosomal subunit biogenesis and possibly also in cell cycle regulation and energy metabolism. The polypeptide is GTPase Era (Erythrobacter litoralis (strain HTCC2594)).